The following is a 348-amino-acid chain: Protein RecA (348 aa).

66-73 lines the ATP pocket; it reads GPESSGKT.

The protein belongs to the RecA family.

Its subcellular location is the cytoplasm. Can catalyze the hydrolysis of ATP in the presence of single-stranded DNA, the ATP-dependent uptake of single-stranded DNA by duplex DNA, and the ATP-dependent hybridization of homologous single-stranded DNAs. It interacts with LexA causing its activation and leading to its autocatalytic cleavage. In Neisseria gonorrhoeae (strain NCCP11945), this protein is Protein RecA.